The following is a 157-amino-acid chain: SsrA-binding protein (157 aa).

The tract at residues 133–157 is disordered; that stretch reads HDKRNSIKEREGKREVERALKSRSR.

Belongs to the SmpB family.

The protein localises to the cytoplasm. Its function is as follows. Required for rescue of stalled ribosomes mediated by trans-translation. Binds to transfer-messenger RNA (tmRNA), required for stable association of tmRNA with ribosomes. tmRNA and SmpB together mimic tRNA shape, replacing the anticodon stem-loop with SmpB. tmRNA is encoded by the ssrA gene; the 2 termini fold to resemble tRNA(Ala) and it encodes a 'tag peptide', a short internal open reading frame. During trans-translation Ala-aminoacylated tmRNA acts like a tRNA, entering the A-site of stalled ribosomes, displacing the stalled mRNA. The ribosome then switches to translate the ORF on the tmRNA; the nascent peptide is terminated with the 'tag peptide' encoded by the tmRNA and targeted for degradation. The ribosome is freed to recommence translation, which seems to be the essential function of trans-translation. The chain is SsrA-binding protein from Verminephrobacter eiseniae (strain EF01-2).